The chain runs to 158 residues: Cyclic pyranopterin monophosphate synthase (158 aa).

Residues 76–78 (LCH) and 114–115 (ME) contribute to the substrate site. The active site involves Asp129.

Belongs to the MoaC family. Homohexamer; trimer of dimers.

The catalysed reaction is (8S)-3',8-cyclo-7,8-dihydroguanosine 5'-triphosphate = cyclic pyranopterin phosphate + diphosphate. It participates in cofactor biosynthesis; molybdopterin biosynthesis. In terms of biological role, catalyzes the conversion of (8S)-3',8-cyclo-7,8-dihydroguanosine 5'-triphosphate to cyclic pyranopterin monophosphate (cPMP). The sequence is that of Cyclic pyranopterin monophosphate synthase from Brucella anthropi (strain ATCC 49188 / DSM 6882 / CCUG 24695 / JCM 21032 / LMG 3331 / NBRC 15819 / NCTC 12168 / Alc 37) (Ochrobactrum anthropi).